The sequence spans 782 residues: DnaJ homolog subfamily C member 16 (782 aa).

Positions 1–25 are cleaved as a signal peptide; the sequence is MEVRKLSISWQFLIVLVLILQILSA. At 26-535 the chain is on the cytoplasmic side; sequence LDFDPYKVLG…DSIFHNNWRE (510 aa). In terms of domain architecture, J spans 29-93; sequence DPYKVLGVSR…EKRSNYDQYG (65 aa). One can recognise a Thioredoxin domain in the interval 119–247; the sequence is FYFDESFFHF…LRQFVESLLP (129 aa). A helical; Anchor for type IV membrane protein transmembrane segment spans residues 536-556; that stretch reads MMPLLSLIFSALFILFGTVIV. Over 557 to 782 the chain is Extracellular; that stretch reads QAFSDSSDER…FYIPSWPELD (226 aa). The segment at 562 to 593 is disordered; it reads SSDERESSPPDKEEAQEKTGKTEPSFTKENSS. Residues 563–582 show a composition bias toward basic and acidic residues; it reads SDERESSPPDKEEAQEKTGK. Residues 583–593 are compositionally biased toward polar residues; sequence TEPSFTKENSS. An N-linked (GlcNAc...) asparagine glycan is attached at N631.

The protein localises to the endoplasmic reticulum membrane. Plays an important role in regulating the size of autophagosomes during the formation process. In Pongo abelii (Sumatran orangutan), this protein is DnaJ homolog subfamily C member 16 (DNAJC16).